Here is a 253-residue protein sequence, read N- to C-terminus: REF/SRPP-like protein OsI_017815 (253 aa).

Residues 1–26 (MADSGSDAPISNRPEEEVTVEKTPEM) form a disordered region. The segment covering 13–26 (RPEEEVTVEKTPEM) has biased composition (basic and acidic residues).

The protein belongs to the REF/SRPP family.

The polypeptide is REF/SRPP-like protein OsI_017815 (Oryza sativa subsp. indica (Rice)).